A 95-amino-acid chain; its full sequence is Parvalbumin alpha (95 aa).

Ser19 is modified (phosphoserine). 2 EF-hand domains span residues 34-69 (KNRE…FSAD) and 73-95 (LSDT…KIGA). Residues Asp47, Asp49, Ser51, Phe53, Glu55, Glu58, Asp86, Asp88, Asp90, and Lys92 each coordinate Ca(2+).

This sequence belongs to the parvalbumin family.

In terms of biological role, in muscle, parvalbumin is thought to be involved in relaxation after contraction. It binds two calcium ions. This is Parvalbumin alpha (PVALB) from Cavia porcellus (Guinea pig).